A 100-amino-acid chain; its full sequence is Integration host factor subunit beta (100 aa).

Positions 81-100 (KPGKELRDRVNEDEHEEAHT) are disordered. The span at 82–100 (PGKELRDRVNEDEHEEAHT) shows a compositional bias: basic and acidic residues.

This sequence belongs to the bacterial histone-like protein family. As to quaternary structure, heterodimer of an alpha and a beta chain.

This protein is one of the two subunits of integration host factor, a specific DNA-binding protein that functions in genetic recombination as well as in transcriptional and translational control. The chain is Integration host factor subunit beta (ihfB) from Pseudomonas putida (Arthrobacter siderocapsulatus).